We begin with the raw amino-acid sequence, 59 residues long: UPF0434 protein LHK_01103 (59 aa).

It belongs to the UPF0434 family.

The polypeptide is UPF0434 protein LHK_01103 (Laribacter hongkongensis (strain HLHK9)).